Consider the following 101-residue polypeptide: Interleukin-8 (101 aa).

The N-terminal stretch at 1-22 is a signal peptide; that stretch reads MTSKLAVALLAAFLLSAALCEA. 2 disulfides stabilise this stretch: cysteine 34-cysteine 61 and cysteine 36-cysteine 77.

This sequence belongs to the intercrine alpha (chemokine CxC) family. As to quaternary structure, homodimer. Interacts with TNFAIP6 (via Link domain); this interaction interferes with chemokine binding to glycosaminoglycans.

It is found in the secreted. In terms of biological role, chemotactic factor that mediates inflammatory response by attracting neutrophils, basophils, and T-cells to clear pathogens and protect the host from infection. Also plays an important role in neutrophil activation. Released in response to an inflammatory stimulus, exerts its effect by binding to the G-protein-coupled receptors CXCR1 and CXCR2, primarily found in neutrophils, monocytes and endothelial cells. G-protein heterotrimer (alpha, beta, gamma subunits) constitutively binds to CXCR1/CXCR2 receptor and activation by IL8 leads to beta and gamma subunits release from Galpha (GNAI2 in neutrophils) and activation of several downstream signaling pathways including PI3K and MAPK pathways. The chain is Interleukin-8 (CXCL8) from Bos taurus (Bovine).